The chain runs to 198 residues: MNYLYLIILGIVCYFIGNISGSIAISKLVYKQDIRNYGSKNAGATNALRVYGVKVGLATFLIDFFKGLLCAYLGFKFYGSLGILVCGLLCVIGHILPVLYNFKGGKGIATSFGVLLFAQPLQVLILLILFLIVVLMTKYVSLGSVLGCISAVIYGLIYIRKDFYIGLIYILLGIISLFKHRSNINRLIHGKESKLGKN.

6 helical membrane passes run 5–25 (YLII…SIAI), 55–75 (VGLA…YLGF), 79–99 (GSLG…LPVL), 114–134 (VLLF…LIVV), 139–159 (YVSL…LIYI), and 164–184 (YIGL…RSNI).

It belongs to the PlsY family. In terms of assembly, probably interacts with PlsX.

The protein localises to the cell membrane. The catalysed reaction is an acyl phosphate + sn-glycerol 3-phosphate = a 1-acyl-sn-glycero-3-phosphate + phosphate. It functions in the pathway lipid metabolism; phospholipid metabolism. Catalyzes the transfer of an acyl group from acyl-phosphate (acyl-PO(4)) to glycerol-3-phosphate (G3P) to form lysophosphatidic acid (LPA). This enzyme utilizes acyl-phosphate as fatty acyl donor, but not acyl-CoA or acyl-ACP. This Finegoldia magna (strain ATCC 29328 / DSM 20472 / WAL 2508) (Peptostreptococcus magnus) protein is Glycerol-3-phosphate acyltransferase.